Reading from the N-terminus, the 1591-residue chain is Rho guanine nucleotide exchange factor TIAM1 (1591 aa).

The tract at residues 1-70 (MGNAESQNVD…TPSIPQSLAE (70 aa)) is disordered. Gly-2 is lipidated: N-myristoyl glycine. A compositionally biased stretch (basic and acidic residues) spans 8-19 (NVDHEFYGEKHA). A compositionally biased stretch (basic residues) spans 20–49 (SLGRKHTSRSLRLSHKTRRTRHASSGKAIH). Low complexity predominate over residues 53 to 67 (EVSTRSSSTPSIPQS). Residues Ser-231, Ser-356, and Ser-358 each carry the phosphoserine modification. Disordered stretches follow at residues 305 to 380 (QISL…DRAR) and 393 to 422 (MSTT…SPGQ). Over residues 340 to 359 (TTDTDLLSRRSNATNSSYSP) the composition is skewed to polar residues. Residues 367–376 (GSDSGSSSTG) are compositionally biased toward low complexity. A compositionally biased stretch (polar residues) spans 412-422 (QSSGTLSSPGQ). The PH 1 domain occupies 434–549 (VRKAGALAVK…TAIHSACAAA (116 aa)). Ser-695 is modified (phosphoserine). Residues 765–832 (TPSWFCLPNN…QPEEDIYELL (68 aa)) form the RBD domain. Tyr-829 carries the phosphotyrosine; by NTRK2 modification. Residues 845-908 (NIHIEKSDAA…NNRAAGTLNS (64 aa)) enclose the PDZ domain. The tract at residues 933–1034 (GVELLENPPH…TSPQLATTRQ (102 aa)) is disordered. The segment covering 958 to 975 (LTSNPGHSLSSEQGSSAE) has biased composition (polar residues). Residues 977–990 (APEEGEGPDLESSD) show a composition bias toward acidic residues. Positions 1014 to 1028 (PSDSSPSPQDATSPQ) are enriched in low complexity. One can recognise a DH domain in the interval 1040-1234 (KLRKVICELL…NKVASHINEM (195 aa)). Positions 1261 to 1397 (DLSMGDLLLH…KSVHSILRDK (137 aa)) constitute a PH 2 domain. Tyr-1323 carries the phosphotyrosine modification. Glycyl lysine isopeptide (Lys-Gly) (interchain with G-Cter in ubiquitin) cross-links involve residues Lys-1404 and Lys-1420. A disordered region spans residues 1456 to 1481 (TIDSDAISASSPEKEPQQPAGGGDTD). Residue Ser-1519 is modified to Phosphoserine.

This sequence belongs to the TIAM family. As to quaternary structure, component of the Par polarity complex, composed of at least phosphorylated PRKCZ, PARD3 and TIAM1. Interacts with BAIAP2. Interacts (via PDZ domain) with CNTNAP4, SDC1 and SDC3 (via C-terminus). Interacts with CD44, PARD3 and MAPK8IP2. Interacts with EPHA8; regulates clathrin-mediated endocytosis of EPHA8. Interacts with NTRK2; mediates the activation of RAC1 by BDNF. Post-translationally, ubiquitinated. Undergoes 'Lys-48' ubiquitination at Lys-1404 and Lys-1420 by a CUL3(KBTBD6/7) E3 ubiquitin ligase complex composed of CUL3, RBX1, KBTBD6 and KBTBD7. 'Lys-48' ubiquitination at Lys-1404 and Lys-1420 triggers proteasomal degradation. Ubiquitination at Lys-1404 and Lys-1420 by CUL3(KBTBD6/7) also requires the membrane-associated protein GABARAP and may therefore be spatially restricted within the cell. Highly expressed in brain and testis and at low or moderate levels in almost all other normal tissues. Found in virtually all analyzed tumor cell lines including B- and T-lymphomas, neuroblastomas, melanomas and carcinomas.

The protein resides in the cell junction. The protein localises to the cell membrane. In terms of biological role, guanyl-nucleotide exchange factor that activates RHO-like proteins and connects extracellular signals to cytoskeletal activities. Activates RAC1, CDC42, and to a lesser extent RHOA and their downstream signaling to regulate processes like cell adhesion and cell migration. This Mus musculus (Mouse) protein is Rho guanine nucleotide exchange factor TIAM1.